Reading from the N-terminus, the 74-residue chain is Putative defensin-like protein 27 (74 aa).

Residues 1–19 (MVHPRFVFFAFLALSVLLA) form the signal peptide. Disulfide bonds link Cys36–Cys74, Cys46–Cys65, Cys51–Cys70, and Cys55–Cys72.

The protein belongs to the DEFL family.

Its subcellular location is the secreted. The polypeptide is Putative defensin-like protein 27 (Arabidopsis thaliana (Mouse-ear cress)).